Reading from the N-terminus, the 56-residue chain is Small ribosomal subunit protein uS14 (56 aa).

Zn(2+) contacts are provided by Cys21, Cys24, Cys39, and Cys42.

It belongs to the universal ribosomal protein uS14 family. The cofactor is Zn(2+).

The chain is Small ribosomal subunit protein uS14 (RPS29) from Debaryomyces hansenii (strain ATCC 36239 / CBS 767 / BCRC 21394 / JCM 1990 / NBRC 0083 / IGC 2968) (Yeast).